The following is an 859-amino-acid chain: DNA mismatch repair protein MutS (859 aa).

617–624 (GPNMGGKS) contributes to the ATP binding site.

The protein belongs to the DNA mismatch repair MutS family.

This protein is involved in the repair of mismatches in DNA. It is possible that it carries out the mismatch recognition step. This protein has a weak ATPase activity. The protein is DNA mismatch repair protein MutS of Stutzerimonas stutzeri (strain A1501) (Pseudomonas stutzeri).